We begin with the raw amino-acid sequence, 98 residues long: Aspartyl/glutamyl-tRNA(Asn/Gln) amidotransferase subunit C (98 aa).

The protein belongs to the GatC family. As to quaternary structure, heterotrimer of A, B and C subunits.

It catalyses the reaction L-glutamyl-tRNA(Gln) + L-glutamine + ATP + H2O = L-glutaminyl-tRNA(Gln) + L-glutamate + ADP + phosphate + H(+). The enzyme catalyses L-aspartyl-tRNA(Asn) + L-glutamine + ATP + H2O = L-asparaginyl-tRNA(Asn) + L-glutamate + ADP + phosphate + 2 H(+). Allows the formation of correctly charged Asn-tRNA(Asn) or Gln-tRNA(Gln) through the transamidation of misacylated Asp-tRNA(Asn) or Glu-tRNA(Gln) in organisms which lack either or both of asparaginyl-tRNA or glutaminyl-tRNA synthetases. The reaction takes place in the presence of glutamine and ATP through an activated phospho-Asp-tRNA(Asn) or phospho-Glu-tRNA(Gln). This Beutenbergia cavernae (strain ATCC BAA-8 / DSM 12333 / CCUG 43141 / JCM 11478 / NBRC 16432 / NCIMB 13614 / HKI 0122) protein is Aspartyl/glutamyl-tRNA(Asn/Gln) amidotransferase subunit C.